The chain runs to 397 residues: Protochlorophyllide reductase, chloroplastic (397 aa).

The transit peptide at 1–57 (MALTMSAKSVSARAQVSSKAQAAPAVAVSGRTSSRVMPAPALAARSSVARTPLVVCA) directs the protein to the chloroplast.

This sequence belongs to the short-chain dehydrogenases/reductases (SDR) family. POR subfamily.

The protein localises to the plastid. The protein resides in the chloroplast. It carries out the reaction chlorophyllide a + NADP(+) = protochlorophyllide a + NADPH + H(+). The protein operates within porphyrin-containing compound metabolism; chlorophyll biosynthesis. In terms of biological role, phototransformation of protochlorophyllide (Pchlide) to chlorophyllide (Chlide). The chain is Protochlorophyllide reductase, chloroplastic (PORA) from Chlamydomonas reinhardtii (Chlamydomonas smithii).